Consider the following 498-residue polypeptide: UDP-N-acetylmuramate--L-alanine ligase (498 aa).

An ATP-binding site is contributed by 120–126 (GSHGKTT).

Belongs to the MurCDEF family.

The protein resides in the cytoplasm. The catalysed reaction is UDP-N-acetyl-alpha-D-muramate + L-alanine + ATP = UDP-N-acetyl-alpha-D-muramoyl-L-alanine + ADP + phosphate + H(+). It participates in cell wall biogenesis; peptidoglycan biosynthesis. Its function is as follows. Cell wall formation. The protein is UDP-N-acetylmuramate--L-alanine ligase of Rickettsia typhi (strain ATCC VR-144 / Wilmington).